Here is a 130-residue protein sequence, read N- to C-terminus: Small ribosomal subunit protein uS9 (130 aa).

Belongs to the universal ribosomal protein uS9 family.

The polypeptide is Small ribosomal subunit protein uS9 (Desulfosudis oleivorans (strain DSM 6200 / JCM 39069 / Hxd3) (Desulfococcus oleovorans)).